The sequence spans 497 residues: Ammonium transporter Rh type C (497 aa).

At 1–9 (MAWNTNLRG) the chain is on the cytoplasmic side. A helical membrane pass occupies residues 10 to 30 (RLPITCLILQVTMVVLFGVFV). Residues 31–61 (RYDIQADAHWWLEKKRKNISSDVENEFYYRY) are Extracellular-facing. N48 is a glycosylation site (N-linked (GlcNAc...) asparagine). The chain crosses the membrane as a helical span at residues 62-82 (PSFEDVHAMVFVGFGFLMTYL). The Cytoplasmic portion of the chain corresponds to 83–93 (QRYGFSAVGFN). The helical transmembrane segment at 94–114 (FLLAAFGIQWALLMQGWFHFF) threads the bilayer. Residues 115–125 (EEGHILLSVEN) lie on the Extracellular side of the membrane. The helical transmembrane segment at 126 to 145 (LIQADFCVASTCVAFGAVLG) threads the bilayer. The Cytoplasmic segment spans residues 146-151 (KISPMQ). The helical transmembrane segment at 152-174 (LLIMTFFQVTLFTVNEFILLNLI) threads the bilayer. The Extracellular segment spans residues 175 to 179 (EAKDA). A helical membrane pass occupies residues 180 to 200 (GGSMTIHTFGAYFGLTVTWIL). Topologically, residues 201 to 219 (YRKNLEQSKQRQSSVYHSD) are cytoplasmic. The chain crosses the membrane as a helical span at residues 220-240 (LFAMIGTLFLWIYWPSFNSAS). Residues 241-251 (SFHGDTQHRAA) lie on the Extracellular side of the membrane. Residues 252-272 (LNTYLSLAASVLTTVAVSSVI) form a helical membrane-spanning segment. The Cytoplasmic portion of the chain corresponds to 273-282 (HKKGKLDMVH). The helical transmembrane segment at 283–303 (IQNATLAGGVGVGTAAEMMLT) threads the bilayer. Position 304 (P304) is a topological domain, extracellular. A helical transmembrane segment spans residues 305 to 325 (YGALIVGFFCGILSTLGFAYL). Residues 326 to 340 (SPFLESRLRIQDTCG) are Cytoplasmic-facing. A helical membrane pass occupies residues 341 to 361 (IHNLHGIPGIIGGIVGAVTAA). Residues 362–395 (YSSPDVYGEPGIVHSFGFGGYKADWTKRMQGRSQ) lie on the Extracellular side of the membrane. Residues 396–416 (IFGLLLSLAMALVGGIIVGFI) traverse the membrane as a helical segment. Residues 417-497 (LKLPFWGQAS…ATVTSSSLVH (81 aa)) lie on the Cytoplasmic side of the membrane.

This sequence belongs to the ammonium transporter (TC 2.A.49) family. Rh subfamily. As to quaternary structure, homotrimer. N-glycosylated. As to expression, expressed by connecting tubule cells and intercalated cells of the collecting duct in kidney (at protein level).

It is found in the cell membrane. The protein resides in the apical cell membrane. The enzyme catalyses NH4(+)(in) = NH4(+)(out). It catalyses the reaction methylamine(out) = methylamine(in). The catalysed reaction is CO2(out) = CO2(in). Functionally, ammonium transporter involved in the maintenance of acid-base homeostasis. Transports ammonium and its related derivative methylammonium across the plasma membrane of epithelial cells likely contributing to renal transepithelial ammonia transport and ammonia metabolism. Postulated to primarily mediate an electroneutral bidirectional transport of NH3 ammonia species according to a mechanism that implies interaction of an NH4(+) ion with acidic residues of the pore entry followed by dissociation of NH4(+) into NH3 and H(+). As a result NH3 transits through the central pore and is protonated on the extracellular side reforming NH4(+). May act as a CO2 channel providing for renal acid secretion. The protein is Ammonium transporter Rh type C (Rhcg) of Rattus norvegicus (Rat).